The primary structure comprises 566 residues: Berberine bridge enzyme-like D-2 (566 aa).

A signal peptide spans 1–33; sequence MKRNISMSLQRLLIILMMISFLFTSLLVPSVSA. Cysteines 42 and 103 form a disulfide. An N-linked (GlcNAc...) asparagine glycan is attached at Asn-50. The region spanning 81–257 is the FAD-binding PCMH-type domain; that stretch reads SKPKPTVIIV…YAWKIRLLKV (177 aa). His-118 carries the pros-8alpha-FAD histidine modification. 3 N-linked (GlcNAc...) asparagine glycosylation sites follow: Asn-364, Asn-378, and Asn-503.

The protein belongs to the oxygen-dependent FAD-linked oxidoreductase family. The cofactor is FAD.

The protein localises to the vacuole. Its pathway is alkaloid biosynthesis; nicotine biosynthesis. Involved in the biosynthesis of pyridine alkaloid natural products, leading mainly to the production of anabasine, anatabine, nicotine and nornicotine, effective deterrents against herbivores with antiparasitic and pesticide properties (neurotoxins); nornicotine serves as the precursor in the synthesis of the carcinogen compound N'-nitrosonornicotine (NNN). Catalyzes a late oxidation step subsequent to the pyridine ring condensation reaction in the biosynthesis of alkaloids. This Nicotiana tabacum (Common tobacco) protein is Berberine bridge enzyme-like D-2.